Consider the following 321-residue polypeptide: uncharacterized protein (321 aa).

The interval 1–80 (MQGGQEVGRE…GELSGGWGEF (80 aa)) is disordered.

This is an uncharacterized protein from Mus musculus (Mouse).